The primary structure comprises 247 residues: Adenosylcobinamide-GDP ribazoletransferase (247 aa).

6 helical membrane passes run 31–51, 55–75, 109–129, 135–155, 183–203, and 227–247; these read ILFYPLVGLIIGGILFLVTCI, LPALLLAAIVLALWIWLTGGL, IGVLSLVIICLLKFALVYVLI, LFLICIPILGRVVPSILFLTT, VLLLPLYWGWQGLIAIIGFLI, and AIEIGETVLMFTFVVSYFYLV.

It belongs to the CobS family. Mg(2+) serves as cofactor.

It localises to the cell inner membrane. It carries out the reaction alpha-ribazole + adenosylcob(III)inamide-GDP = adenosylcob(III)alamin + GMP + H(+). The enzyme catalyses alpha-ribazole 5'-phosphate + adenosylcob(III)inamide-GDP = adenosylcob(III)alamin 5'-phosphate + GMP + H(+). It participates in cofactor biosynthesis; adenosylcobalamin biosynthesis; adenosylcobalamin from cob(II)yrinate a,c-diamide: step 7/7. Joins adenosylcobinamide-GDP and alpha-ribazole to generate adenosylcobalamin (Ado-cobalamin). Also synthesizes adenosylcobalamin 5'-phosphate from adenosylcobinamide-GDP and alpha-ribazole 5'-phosphate. The sequence is that of Adenosylcobinamide-GDP ribazoletransferase from Acinetobacter baumannii (strain ATCC 17978 / DSM 105126 / CIP 53.77 / LMG 1025 / NCDC KC755 / 5377).